Reading from the N-terminus, the 273-residue chain is Putative phosphoenolpyruvate synthase regulatory protein (273 aa).

153–160 (AVSRAGKT) is a binding site for ADP.

The protein belongs to the pyruvate, phosphate/water dikinase regulatory protein family. PSRP subfamily.

The enzyme catalyses [pyruvate, water dikinase] + ADP = [pyruvate, water dikinase]-phosphate + AMP + H(+). It carries out the reaction [pyruvate, water dikinase]-phosphate + phosphate + H(+) = [pyruvate, water dikinase] + diphosphate. Bifunctional serine/threonine kinase and phosphorylase involved in the regulation of the phosphoenolpyruvate synthase (PEPS) by catalyzing its phosphorylation/dephosphorylation. This is Putative phosphoenolpyruvate synthase regulatory protein from Xanthomonas oryzae pv. oryzae (strain MAFF 311018).